A 1065-amino-acid chain; its full sequence is DNA-directed RNA polymerase subunit beta (1065 aa).

Belongs to the RNA polymerase beta chain family. In terms of assembly, in plastids the minimal PEP RNA polymerase catalytic core is composed of four subunits: alpha, beta, beta', and beta''. When a (nuclear-encoded) sigma factor is associated with the core the holoenzyme is formed, which can initiate transcription.

Its subcellular location is the plastid. The protein localises to the chloroplast. It catalyses the reaction RNA(n) + a ribonucleoside 5'-triphosphate = RNA(n+1) + diphosphate. DNA-dependent RNA polymerase catalyzes the transcription of DNA into RNA using the four ribonucleoside triphosphates as substrates. The polypeptide is DNA-directed RNA polymerase subunit beta (Marchantia polymorpha (Common liverwort)).